A 1770-amino-acid chain; its full sequence is Serine/threonine-protein kinase RIM15 (1770 aa).

The tract at residues 334 to 358 is disordered; sequence HSLSTFPQDNGNNNNNNNNNNNNNN. The segment covering 343 to 358 has biased composition (low complexity); sequence NGNNNNNNNNNNNNNN. 2 positions are modified to phosphoserine: S380 and S476. 2 disordered regions span residues 530-563 and 583-694; these read TPTA…LDSN and STIS…NSVL. Over residues 583–601 the composition is skewed to polar residues; that stretch reads STISIDRDNNTNSRGSSMK. A compositionally biased stretch (low complexity) spans 611–632; sequence SRTSNSERPSSSSSRLGIRSRS. Over residues 637–660 the composition is skewed to basic and acidic residues; sequence QKIEYSHVDNDDRTNEMLSRDKDS. Positions 669–692 are enriched in low complexity; it reads TTITSSTQATTTGTKTNSNNSTNS. T704 bears the Phosphothreonine mark. Residues S709, S733, S736, and S737 each carry the phosphoserine modification. T747 bears the Phosphothreonine mark. Residues 794 to 1254 enclose the Protein kinase domain; it reads YDILKPISKG…IQEIKDHPYF (461 aa). ATP is bound by residues 800-808 and K823; that span reads ISKGAYGSV. The Proton acceptor role is filled by D918. The span at 970–980 shows a compositional bias: low complexity; that stretch reads NNFTMNNNNSN. The disordered stretch occupies residues 970 to 1032; sequence NNFTMNNNNS…MTPTPSTNTV (63 aa). The segment covering 981–990 has biased composition (polar residues); sequence HSQLSTPDSF. Low complexity predominate over residues 1014–1031; it reads YSSTSNSHSMTPTPSTNT. Phosphoserine is present on residues S1044, S1048, and S1064. Phosphothreonine; by PHO85 is present on T1075. Residues 1255–1320 form the AGC-kinase C-terminal domain; that stretch reads KNVDWDHVYD…NTDVSELSAA (66 aa). The segment covering 1378–1391 has biased composition (low complexity); that stretch reads TGYITPNGTGTTTT. A disordered region spans residues 1378–1403; the sequence is TGYITPNGTGTTTTSAKNSPNLKNLS. Residues 1392-1401 show a composition bias toward polar residues; the sequence is SAKNSPNLKN. The residue at position 1421 (S1421) is a Phosphoserine. Disordered stretches follow at residues 1448-1507 and 1519-1572; these read KSEH…STFG and FSTR…PANT. Positions 1463–1481 are enriched in low complexity; that stretch reads SSASLMGSSSDGSVSTPGS. Phosphoserine occurs at positions 1531, 1538, 1542, and 1565. A Response regulatory domain is found at 1636 to 1750; sequence DVLVCEPIPI…ELKKLVAKYA (115 aa). S1764 is modified (phosphoserine).

It belongs to the protein kinase superfamily. Ser/Thr protein kinase family. In terms of assembly, interacts with the cyclin-dependent kinase (CDK) PHO85 and IGO1. Post-translationally, autophosphorylated. Phosphorylation by PKA strongly inhibits kinase activity. Phosphorylation by cyclin-CDK PHO80-PHO85 under favorable growth condition causes inactivation of RIM15 by promoting its export to the cytoplasm.

It localises to the cytoplasm. It is found in the nucleus. It catalyses the reaction L-seryl-[protein] + ATP = O-phospho-L-seryl-[protein] + ADP + H(+). The catalysed reaction is L-threonyl-[protein] + ATP = O-phospho-L-threonyl-[protein] + ADP + H(+). With respect to regulation, kinase activity is inhibited by phosphorylation by cAMP-dependent protein kinase (PKA). Its function is as follows. Protein kinase that positively regulates proper entry into stationary phase of cells under nutrient starvation conditions. Involved in glycogen and trehalose accumulation, derepression of stress-induced genes, induction of thermotolerance and starvation resistance, and proper G1 cell cycle arrest. Also involved in the activation of a meiotic genes activation pathway. Phosphorylates IGO1 and IGO2, both involved in the TORC1 control of gene expression and chronological life span. The sequence is that of Serine/threonine-protein kinase RIM15 (RIM15) from Saccharomyces cerevisiae (strain ATCC 204508 / S288c) (Baker's yeast).